The primary structure comprises 1192 residues: Homeodomain-interacting protein kinase 3 (1192 aa).

A Glycyl lysine isopeptide (Lys-Gly) (interchain with G-Cter in SUMO); alternate cross-link involves residue K27. K27 participates in a covalent cross-link: Glycyl lysine isopeptide (Lys-Gly) (interchain with G-Cter in SUMO2); alternate. The 329-residue stretch at 197-525 (YEVLDFLGRG…PIETLNHPFV (329 aa)) folds into the Protein kinase domain. ATP is bound by residues 203 to 211 (LGRGTFGQV) and K226. The active-site Proton acceptor is D322. At Y359 the chain carries Phosphotyrosine. Positions 767 to 921 (QNRSNSLQNT…NSMSDDEQES (155 aa)) are interaction with AR. The interaction with FAS stretch occupies residues 775–868 (NTNIPHSAFI…SPRPSLRECK (94 aa)). The disordered stretch occupies residues 799 to 829 (CVDTQDNHTSEGEAGTCREASVRQDSSVSDK). A required for localization to nuclear speckles region spans residues 832-988 (QTIIIADSPS…ESGLSVDEHM (157 aa)). Positions 843 to 895 (AVSVITISSDSDDEETSPRPSLRECKGSLDCEACQSTLNIDRMCSLSSPDSTL) are SUMO interaction motifs (SIM); required for nuclear localization and kinase activity. Residues 847-857 (ITISSDSDDEE) form an interaction with UBL1 region. The segment covering 889 to 906 (SSPDSTLSTSSSGQSSPS) has biased composition (low complexity). Disordered regions lie at residues 889-943 (SSPD…PFAE) and 956-1023 (LGTC…KPAA). K1185 is covalently cross-linked (Glycyl lysine isopeptide (Lys-Gly) (interchain with G-Cter in SUMO)).

This sequence belongs to the protein kinase superfamily. CMGC Ser/Thr protein kinase family. HIPK subfamily. Interacts with UBL1/SUMO-1. Interacts with and stabilizes ligand-bound androgen receptor (AR). Interacts with Nkx1-2. Interacts with FAS and DAXX. Probably part of a complex consisting of HIPK3, FAS and FADD. Binds to NR5A1/SF1, SPEN/MINT and RUNX2. In terms of processing, autophosphorylated, but autophosphorylation is not required for catalytic activity. May be sumoylated. As to expression, heart, skeletal muscle, spleen, testis and lung.

It localises to the cytoplasm. The protein localises to the nucleus. It catalyses the reaction L-seryl-[protein] + ATP = O-phospho-L-seryl-[protein] + ADP + H(+). It carries out the reaction L-threonyl-[protein] + ATP = O-phospho-L-threonyl-[protein] + ADP + H(+). In terms of biological role, serine/threonine-protein kinase involved in transcription regulation, apoptosis and steroidogenic gene expression. Phosphorylates JUN and RUNX2. Seems to negatively regulate apoptosis by promoting FADD phosphorylation. Enhances androgen receptor-mediated transcription. May act as a transcriptional corepressor for NK homeodomain transcription factors. The phosphorylation of NR5A1 activates SF1 leading to increased steroidogenic gene expression upon cAMP signaling pathway stimulation. In osteoblasts, supports transcription activation: phosphorylates RUNX2 that synergizes with SPEN/MINT to enhance FGFR2-mediated activation of the osteocalcin FGF-responsive element (OCFRE). This Mus musculus (Mouse) protein is Homeodomain-interacting protein kinase 3 (Hipk3).